A 543-amino-acid polypeptide reads, in one-letter code: MTKYVFVTGGVVSSIGKGIVAASLGRLLKSRQYSVSILKLDPYINVDPGTMSPFQHGEVFVTDDGAETDLDLGHYERFTDTPMSRLNSVTTGSIYQAVINKERRGDYMGGTVQVIPHITNEIKERILRVAKDKNPDVVIIEIGGTVGDIESLPFLEAIRQFRTEVGRHHVLFMHVTLVPWIPSAGEMKTKPTQHSVKELRSIGIQPDILICRCDRPLVPGIKEKLSQFCDVPVECVIPSPDAKSIYEVPLLLEREGLATQVLNLLNLEQRQPDLSQWQALVERLYGSHRPLEVAIVGKYVRLSDAYLSVVEALRHSAIALDQELRIRWVNSEELVENGVETALSNVGAIVVPGGFGIRGVEGKIAAIQYAREQGIPFLGLCLGMQCAVIEWARHIAGLENANSAEFDANTPHPVIHLLPEQQDIVDLGGTMRLGLYACRLAPHSLAEKLYGETVIYERHRHRYEFNNAYRNLFLETGYQITGTSPDGRLVEIIEYPAHPFFIAVQFHPEFRSRPNAPHPLFYGLLAAAAKNSNRDHPQLVPSF.

The tract at residues 1 to 267 (MTKYVFVTGG…ATQVLNLLNL (267 aa)) is amidoligase domain. CTP is bound at residue S13. S13 serves as a coordination point for UTP. Residues 14–19 (SIGKGI) and D71 contribute to the ATP site. 2 residues coordinate Mg(2+): D71 and E141. Residues 148 to 150 (DIE), 188 to 193 (KTKPTQ), and K224 contribute to the CTP site. Residues 188-193 (KTKPTQ) and K224 contribute to the UTP site. The Glutamine amidotransferase type-1 domain maps to 292 to 534 (EVAIVGKYVR…LAAAAKNSNR (243 aa)). G354 lines the L-glutamine pocket. The active-site Nucleophile; for glutamine hydrolysis is the C381. L-glutamine-binding positions include 382-385 (LGMQ), E405, and R462. Active-site residues include H507 and E509.

This sequence belongs to the CTP synthase family. Homotetramer.

It carries out the reaction UTP + L-glutamine + ATP + H2O = CTP + L-glutamate + ADP + phosphate + 2 H(+). The catalysed reaction is L-glutamine + H2O = L-glutamate + NH4(+). It catalyses the reaction UTP + NH4(+) + ATP = CTP + ADP + phosphate + 2 H(+). Its pathway is pyrimidine metabolism; CTP biosynthesis via de novo pathway; CTP from UDP: step 2/2. With respect to regulation, allosterically activated by GTP, when glutamine is the substrate; GTP has no effect on the reaction when ammonia is the substrate. The allosteric effector GTP functions by stabilizing the protein conformation that binds the tetrahedral intermediate(s) formed during glutamine hydrolysis. Inhibited by the product CTP, via allosteric rather than competitive inhibition. Catalyzes the ATP-dependent amination of UTP to CTP with either L-glutamine or ammonia as the source of nitrogen. Regulates intracellular CTP levels through interactions with the four ribonucleotide triphosphates. The chain is CTP synthase from Thermosynechococcus vestitus (strain NIES-2133 / IAM M-273 / BP-1).